The chain runs to 517 residues: Serine O-succinyltransferase (517 aa).

A mitochondrion-targeting transit peptide spans 1 to 46 (MSPLNGVARSLPRPFQAVARRPFRVAQPAVACPSNRRSFNHSRSLR). Positions 34 to 66 (SNRRSFNHSRSLRSTGSQSPAPSPRDSSNPALS) are disordered. A compositionally biased stretch (polar residues) spans 45–64 (LRSTGSQSPAPSPRDSSNPA). The 253-residue stretch at 134-386 (NVILLHTGLS…LTQQLATKKQ (253 aa)) folds into the AB hydrolase-1 domain. Residues 141–144 (GLSA) form an important for substrate specificity region. Ser238 functions as the Nucleophile in the catalytic mechanism. Arg307 contributes to the substrate binding site. The disordered stretch occupies residues 413-436 (QPYQEQPSASTSAEQSASASETGS). A compositionally biased stretch (low complexity) spans 416–436 (QEQPSASTSAEQSASASETGS). Residues Asp461 and His498 contribute to the active site. Asp499 contacts substrate.

It belongs to the AB hydrolase superfamily. MetX family.

The protein localises to the mitochondrion. It carries out the reaction succinyl-CoA + L-serine = O-succinyl-L-serine + CoA. It participates in amino-acid biosynthesis; L-cysteine biosynthesis; L-cysteine from L-serine: step 1/2. Transfers a succinyl group from succinyl-CoA to L-serine, forming succinyl-L-serine. Also has weak serine acetyl transferase activity and homoserine succinyl transferase activity. This Emericella nidulans (Aspergillus nidulans) protein is Serine O-succinyltransferase.